A 498-amino-acid chain; its full sequence is ATP synthase subunit alpha, chloroplastic (498 aa).

Residue 170 to 177 (GDRQTGKT) coordinates ATP.

The protein belongs to the ATPase alpha/beta chains family. In terms of assembly, F-type ATPases have 2 components, CF(1) - the catalytic core - and CF(0) - the membrane proton channel. CF(1) has five subunits: alpha(3), beta(3), gamma(1), delta(1), epsilon(1). CF(0) has four main subunits: a, b, b' and c.

The protein localises to the plastid. Its subcellular location is the chloroplast thylakoid membrane. It carries out the reaction ATP + H2O + 4 H(+)(in) = ADP + phosphate + 5 H(+)(out). Produces ATP from ADP in the presence of a proton gradient across the membrane. The alpha chain is a regulatory subunit. The protein is ATP synthase subunit alpha, chloroplastic of Oltmannsiellopsis viridis (Marine flagellate).